The following is an 81-amino-acid chain: Small ribosomal subunit protein bS18 (81 aa).

Belongs to the bacterial ribosomal protein bS18 family. As to quaternary structure, part of the 30S ribosomal subunit. Forms a tight heterodimer with protein bS6.

Its function is as follows. Binds as a heterodimer with protein bS6 to the central domain of the 16S rRNA, where it helps stabilize the platform of the 30S subunit. The sequence is that of Small ribosomal subunit protein bS18 from Desulfotalea psychrophila (strain LSv54 / DSM 12343).